The following is a 139-amino-acid chain: Cytochrome c-551 (139 aa).

The signal sequence occupies residues 1–20; it reads MTRTLAVVLAMTFSAAPVFA. Cys-34, Cys-37, His-38, and Met-116 together coordinate heme c.

It belongs to the cytochrome c family. In terms of processing, binds 1 heme c group covalently per subunit.

The protein is Cytochrome c-551 of Roseobacter denitrificans (strain ATCC 33942 / OCh 114) (Erythrobacter sp. (strain OCh 114)).